The chain runs to 482 residues: Zinc finger protein 223 (482 aa).

The region spanning 8–78 is the KRAB domain; that stretch reads VTFKDVAVVF…DIATQREGNS (71 aa). C2H2-type zinc fingers lie at residues 176–198, 204–226, 232–254, 260–282, and 288–310; these read HSCDECGKSFCYISALHIHQRVH, FKCDVCGKEFSQSLHLQTHQRVH, FKCEQCGRGFRCRSALTVHCKLH, YNCEACGRAFIHDFQLQKHQRIH, and FKCEICSVSFRLRSSLNRHCVVH. Residues 316 to 338 form a C2H2-type 6; degenerate zinc finger; that stretch reads NSTGEYGKGFIRRLDLCKHQTIH. C2H2-type zinc fingers lie at residues 344–366, 372–394, and 400–422; these read YNCKECGKSFRRSSYLLIHQRVH, YKCDKCGKSYITKSGLDLHHRAH, and YNCDDCGKSFRQASSILNHKRLH. The C2H2-type 10; degenerate zinc finger occupies 428–450; that stretch reads FKCEDCGKKLVYRSYRKDQQKNH.

The protein belongs to the krueppel C2H2-type zinc-finger protein family.

The protein localises to the nucleus. Its function is as follows. May be involved in transcriptional regulation. This Homo sapiens (Human) protein is Zinc finger protein 223 (ZNF223).